Consider the following 246-residue polypeptide: DNA repair protein RecO (246 aa).

The protein belongs to the RecO family.

Its function is as follows. Involved in DNA repair and RecF pathway recombination. The protein is DNA repair protein RecO of Maridesulfovibrio salexigens (strain ATCC 14822 / DSM 2638 / NCIMB 8403 / VKM B-1763) (Desulfovibrio salexigens).